The primary structure comprises 135 residues: MGLIVYYSSRSENTHRFVAKLGLRAARIPPSGAAGAFHIREPFVLIVPTYSGDGGKGAVPKQVIRFLNDAENRGHIRGVIAAGNSNFGETYGLAGDVVSQKCQVPYLYRFELLGTEADVANVKHGMERFWTREHL.

The protein belongs to the NrdI family.

Its function is as follows. Probably involved in ribonucleotide reductase function. This Rhizobium johnstonii (strain DSM 114642 / LMG 32736 / 3841) (Rhizobium leguminosarum bv. viciae) protein is Protein NrdI.